A 570-amino-acid chain; its full sequence is Serine/threonine-protein kinase Pink1, mitochondrial (570 aa).

The N-terminal 5 residues, 1 to 5 (MSVRA), are a transit peptide targeting the mitochondrion. Topologically, residues 6–96 (VGSRLFKHGR…AELRKKATRR (91 aa)) are mitochondrial intermembrane. Residues 97–120 (ILFGDSAPFFALVGVSIASGTGIL) traverse the membrane as a helical segment. The Cytoplasmic portion of the chain corresponds to 121-570 (TKEEELEGVC…WIQENLPELD (450 aa)). One can recognise a Protein kinase domain in the interval 162–484 (LSLGKPIAKG…VAANVCQLFL (323 aa)). An ATP-binding site is contributed by lysine 196. A Phosphoserine; by autocatalysis modification is found at serine 205. Glutamate 217 contributes to the Mg(2+) binding site. ATP-binding residues include lysine 295, tyrosine 297, and asparagine 300. Aspartate 337 functions as the Proton acceptor in the catalytic mechanism. Position 341 (aspartate 341) interacts with ATP. The Mg(2+) site is built by asparagine 342 and aspartate 359. Aspartate 359 lines the ATP pocket. At serine 377 the chain carries Phosphoserine; by autocatalysis. A Phosphothreonine; by autocatalysis modification is found at threonine 386. Threonine 530 carries the phosphothreonine modification.

The protein belongs to the protein kinase superfamily. Ser/Thr protein kinase family. The cofactor is Mg(2+). In terms of processing, proteolytically cleaved. In healthy cells, the precursor is continuously imported into mitochondria where it is proteolytically cleaved into its short form by the mitochondrial rhomboid protease rho-7 (TcasGA2_TC013516). The short form is then released into the cytosol where it rapidly undergoes proteasome-dependent degradation. In unhealthy cells, when cellular stress conditions lead to the loss of mitochondrial membrane potential, mitochondrial import is impaired leading to the precursor accumulating on the outer mitochondrial membrane (OMM). Post-translationally, autophosphorylated on Ser-205, which activates kinase activity and is required for substrate recognition. Loss of mitochondrial membrane potential results in the precursor accumulating on the outer mitochondrial membrane (OMM) where it is activated by autophosphorylation at Ser-205. Autophosphorylation is sufficient and essential for selective recruitment of park to depolarized mitochondria, likely via Pink1-dependent phosphorylation of polyubiquitin chains. Also autophosphorylated at Ser-377, Thr-386 and possibly Thr-530. Another report found evidence of autophosphorylation at Ser-154, Thr-186, Thr-218, Ser-267 and Thr-530, as well as a number of other minor sites, but determined that phosphorylation at these sites is not required for enzyme activity and may not occur in vivo.

It localises to the mitochondrion outer membrane. The protein localises to the mitochondrion inner membrane. Its subcellular location is the cytoplasm. The protein resides in the cytosol. The catalysed reaction is L-seryl-[protein] + ATP = O-phospho-L-seryl-[protein] + ADP + H(+). It carries out the reaction L-threonyl-[protein] + ATP = O-phospho-L-threonyl-[protein] + ADP + H(+). Functionally, acts as a serine/threonine-protein kinase. Exhibits a substrate preference for proline at position P+1 and a general preference at several residues for basic residues such as arginine. Also exhibits moderate preferences for a phosphotyrosine at position P-3 and a tryptophan at P-5. Critical to mitochondrial homeostasis it mediates several pathways that maintain mitochondrial health and function. Protects against mitochondrial dysfunction during cellular stress by phosphorylating mitochondrial proteins such as park and likely Drp1, to coordinate mitochondrial quality control mechanisms that remove and replace dysfunctional mitochondrial components. Depending on the severity of mitochondrial damage and/or dysfunction, activity ranges from preventing apoptosis and stimulating mitochondrial biogenesis to regulating mitochondrial dynamics and eliminating severely damaged mitochondria via mitophagy. Appears to be particularly important in maintaining the physiology and function of cells with high energy demands that are undergoing stress or altered metabolic environment, including spermatids, muscle cells and neurons such as the dopaminergic (DA) neurons. Mediates the translocation and activation of park at the outer membrane (OMM) of dysfunctional/depolarized mitochondria. At the OMM of damaged mitochondria, phosphorylates pre-existing polyubiquitin chains, the Pink1-phosphorylated polyubiquitin then recruits park from the cytosol to the OMM where park is fully activated by phosphorylation at 'Ser-80' by Pink1. When cellular stress results in irreversible mitochondrial damage, functions with park to promote the clearance of dysfunctional and/or depolarized mitochondria by selective autophagy (mitophagy). The Pink1-park pathway also promotes fission and/or inhibits fusion of damaged mitochondria, by phosphorylating and thus promoting the park-dependent degradation of proteins involved in mitochondrial fusion/fission such as Marf, Opa1 and fzo. This prevents the refusion of unhealthy mitochondria with the mitochondrial network or initiates mitochondrial fragmentation facilitating their later engulfment by autophagosomes. Also likely to promote mitochondrial fission independently of park and Atg7-mediated mitophagy, via the phosphorylation and activation of Drp1. Regulates motility of damaged mitochondria by phosphorylating Miro which likely promotes its park-dependent degradation by the proteasome; in motor neurons, this inhibits mitochondrial intracellular anterograde transport along the axons which probably increases the chance of the mitochondria being eliminated in the soma. The Pink1-park pathway is also involved in mitochondrial regeneration processes such as promoting mitochondrial biogenesis, activating localized mitochondrial repair, promoting selective turnover of mitochondrial proteins and initiating the mitochondrial import of endogenous proteins. Involved in mitochondrial biogenesis by promoting the park-dependent ubiquitination of transcriptional repressor Paris which leads to its subsequent proteasomal degradation and allows activation of the transcription factor srl. Functions with park to promote localized mitochondrial repair by activating the translation of specific nuclear-encoded mitochondrial RNAs (nc-mtRNAs) on the mitochondrial surface, including several key electron transport chain component nc-mtRNAs. During oogenesis, phosphorylates and inactivates larp on the membrane of defective mitochondria, thus impairing local translation and mtDNA replication and consequently, reducing transmission of deleterious mtDNA mutations to the mature oocyte. Phosphorylates the mitochondrial acyl-CoA dehydrogenase Mcad, and appears to be important for maintaining fatty acid and amino acid metabolism via a mechanism that is independent of it's role in maintaining production of ATP. The sequence is that of Serine/threonine-protein kinase Pink1, mitochondrial from Tribolium castaneum (Red flour beetle).